The primary structure comprises 399 residues: Paraneoplastic antigen-like protein 6A (399 aa).

It belongs to the PNMA family. In terms of tissue distribution, expressed in the brain.

The chain is Paraneoplastic antigen-like protein 6A from Homo sapiens (Human).